The primary structure comprises 158 residues: Single-stranded DNA-binding protein 2 (158 aa).

The SSB domain maps to 1–107 (MNETIVCVVG…IDALAVGHDL (107 aa)). Residues 109–158 (RGTSAFRRPSAKDGEAGVSPAARPEPNWETEPGSQPSVEHQPQPEPAGVT) are disordered.

As to quaternary structure, homotetramer.

In Streptomyces avermitilis (strain ATCC 31267 / DSM 46492 / JCM 5070 / NBRC 14893 / NCIMB 12804 / NRRL 8165 / MA-4680), this protein is Single-stranded DNA-binding protein 2 (ssb2).